Here is a 254-residue protein sequence, read N- to C-terminus: NAD-dependent protein deacetylase 1 (254 aa).

The region spanning 3–252 is the Deacetylase sirtuin-type domain; sequence VDFTTDELDE…PKLLDRLRGM (250 aa). NAD(+) is bound by residues A29, T33, F40, R41, Q105, V107, D108, and H123. F40 provides a ligand contact to nicotinamide. 2 residues coordinate nicotinamide: V107 and D108. H123 (proton acceptor) is an active-site residue. Residues C131, C134, C154, and C157 each contribute to the Zn(2+) site. NAD(+) is bound by residues T195, S196, and N220.

Belongs to the sirtuin family. Class U subfamily. It depends on Zn(2+) as a cofactor.

It localises to the cytoplasm. The enzyme catalyses N(6)-acetyl-L-lysyl-[protein] + NAD(+) + H2O = 2''-O-acetyl-ADP-D-ribose + nicotinamide + L-lysyl-[protein]. In terms of biological role, NAD-dependent protein deacetylase which modulates the activities of several enzymes which are inactive in their acetylated form. Deacetylates the N-terminal lysine residue of Alba, the major archaeal chromatin protein and that, in turn, increases Alba's DNA binding affinity, thereby repressing transcription. This is NAD-dependent protein deacetylase 1 from Pyrobaculum aerophilum (strain ATCC 51768 / DSM 7523 / JCM 9630 / CIP 104966 / NBRC 100827 / IM2).